A 327-amino-acid polypeptide reads, in one-letter code: Tetraacyldisaccharide 4'-kinase (327 aa).

52–59 (TLGGAGKT) provides a ligand contact to ATP.

It belongs to the LpxK family.

The enzyme catalyses a lipid A disaccharide + ATP = a lipid IVA + ADP + H(+). Its pathway is glycolipid biosynthesis; lipid IV(A) biosynthesis; lipid IV(A) from (3R)-3-hydroxytetradecanoyl-[acyl-carrier-protein] and UDP-N-acetyl-alpha-D-glucosamine: step 6/6. In terms of biological role, transfers the gamma-phosphate of ATP to the 4'-position of a tetraacyldisaccharide 1-phosphate intermediate (termed DS-1-P) to form tetraacyldisaccharide 1,4'-bis-phosphate (lipid IVA). This chain is Tetraacyldisaccharide 4'-kinase, found in Methylorubrum populi (strain ATCC BAA-705 / NCIMB 13946 / BJ001) (Methylobacterium populi).